The primary structure comprises 560 residues: DNA ligase B (560 aa).

Lysine 124 acts as the N6-AMP-lysine intermediate in catalysis.

Belongs to the NAD-dependent DNA ligase family. LigB subfamily.

It carries out the reaction NAD(+) + (deoxyribonucleotide)n-3'-hydroxyl + 5'-phospho-(deoxyribonucleotide)m = (deoxyribonucleotide)n+m + AMP + beta-nicotinamide D-nucleotide.. Its function is as follows. Catalyzes the formation of phosphodiester linkages between 5'-phosphoryl and 3'-hydroxyl groups in double-stranded DNA using NAD as a coenzyme and as the energy source for the reaction. This is DNA ligase B from Shigella flexneri.